A 143-amino-acid chain; its full sequence is Transcriptional regulator MraZ (143 aa).

2 SpoVT-AbrB domains span residues 5–47 and 76–119; these read THSP…SQKE and ASDE…DADA.

This sequence belongs to the MraZ family. In terms of assembly, forms oligomers.

Its subcellular location is the cytoplasm. The protein localises to the nucleoid. In Paenarthrobacter aurescens (strain TC1), this protein is Transcriptional regulator MraZ.